Here is a 305-residue protein sequence, read N- to C-terminus: Maximins-S type B/C (305 aa).

The signal sequence occupies residues 1-18 (MNFNYFILVLFFITSGHA). 2 consecutive propeptides follow at residues 19 to 35 (KSET…HIKR) and 52 to 65 (SAEE…LVTR). An Asparagine amide modification is found at Asn-83. Positions 87-100 (SAEEQDLAEHLVTR) are excised as a propeptide. At Asn-118 the chain carries Asparagine amide. The propeptide occupies 122–135 (SAEEQDLAEDLVTR). A Lysine amide modification is found at Lys-153. Positions 157 to 170 (SAEDQDLAEDLVTR) are excised as a propeptide. Asn-188 carries the asparagine amide modification. A propeptide spanning residues 192-205 (SAEEQDLAEHLVTR) is cleaved from the precursor. Asn-223 bears the Asparagine amide mark. Residues 227–240 (SAEEQDLSEDLVTR) constitute a propeptide that is removed on maturation. An Asparagine amide modification is found at Asn-258. The propeptide occupies 262 to 275 (SAEEQDLVEDLVTR). The residue at position 293 (Lys-293) is a Lysine amide. The propeptide occupies 297–305 (SAEQEKDMK).

Belongs to the maximin-S family. In terms of tissue distribution, expressed by the skin dorsal glands.

Its subcellular location is the secreted. Functionally, maximin-S1 has no antimicrobial activity. Has no hemolytic activity. In terms of biological role, maximin-S2 has an activity against mycoplasma but has no activity against common Gram-positive and Gram-negative bacteria nor fungi. Has no hemolytic activity. Its function is as follows. Maximin-S3 has an activity against mycoplasma but has no activity against common Gram-positive and Gram-negative bacteria nor fungi. Has no hemolytic activity. Maximin-S4 has an activity against mycoplasma but has no activity against common Gram-positive and Gram-negative bacteria nor fungi. Has no hemolytic activity. Functionally, maximin-S5 has an activity against mycoplasma but has no activity against common Gram-positive and Gram-negative bacteria nor fungi. Has no hemolytic activity. This Bombina maxima (Giant fire-bellied toad) protein is Maximins-S type B/C.